The primary structure comprises 208 residues: A-type ATP synthase subunit E (208 aa).

This sequence belongs to the V-ATPase E subunit family. Has multiple subunits with at least A(3), B(3), C, D, E, F, H, I and proteolipid K(x).

Its subcellular location is the cell membrane. Its function is as follows. Component of the A-type ATP synthase that produces ATP from ADP in the presence of a proton gradient across the membrane. The protein is A-type ATP synthase subunit E of Ignicoccus hospitalis (strain KIN4/I / DSM 18386 / JCM 14125).